A 993-amino-acid polypeptide reads, in one-letter code: Importin subunit beta-5 (993 aa).

Positions 24 to 100 (AELGLRDLEK…RETLLHLLVS (77 aa)) constitute an Importin N-terminal domain.

The protein localises to the nucleus. In terms of biological role, required for nuclear protein import and mediates docking of import substrate to distinct nucleoporins. Serves a receptor for nuclear localization signals. Mediates the nuclear import of TATA-binding protein (TBP) and of histones H2A and H2B. In Schizosaccharomyces pombe (strain 972 / ATCC 24843) (Fission yeast), this protein is Importin subunit beta-5 (kap114).